The sequence spans 358 residues: 4-hydroxy-2-oxovalerate aldolase 2 (358 aa).

The Pyruvate carboxyltransferase domain occupies 16 to 268 (VLLHDMCLRD…ETGVDLFKLM (253 aa)). 24–25 (RD) lines the substrate pocket. Mn(2+) is bound at residue Asp25. The Proton acceptor role is filled by His28. Residues Ser178 and His207 each coordinate substrate. Positions 207 and 209 each coordinate Mn(2+). Tyr298 provides a ligand contact to substrate.

The protein belongs to the 4-hydroxy-2-oxovalerate aldolase family.

It catalyses the reaction (S)-4-hydroxy-2-oxopentanoate = acetaldehyde + pyruvate. In Methylibium petroleiphilum (strain ATCC BAA-1232 / LMG 22953 / PM1), this protein is 4-hydroxy-2-oxovalerate aldolase 2.